The following is an 82-amino-acid chain: Omega-conotoxin-like 9 (82 aa).

The first 22 residues, 1–22, serve as a signal peptide directing secretion; the sequence is MKLTCMMIAAVLFLTTWTFVTA. A propeptide spanning residues 23 to 51 is cleaved from the precursor; sequence DDSRYGLKNLFPKARHEMKNPEASKLNKR. 3 disulfides stabilise this stretch: C54/C69, C61/C73, and C68/C77.

It belongs to the conotoxin O1 superfamily. Expressed by the venom duct.

It localises to the secreted. Functionally, omega-conotoxins act at presynaptic membranes, they bind and block voltage-gated calcium channels (Cav). This Conus striatus (Striated cone) protein is Omega-conotoxin-like 9.